We begin with the raw amino-acid sequence, 85 residues long: U4-theraphotoxin-Hhn1ad (85 aa).

Residues 1–22 form the signal peptide; it reads MKVTLIAILTCAAVLVLHTTAA. Residues 23–48 constitute a propeptide that is removed on maturation; the sequence is EELKTESQLMEVGMPDTELATVDEER. Disulfide bonds link Cys-52-Cys-66, Cys-56-Cys-77, and Cys-71-Cys-82.

This sequence belongs to the neurotoxin 12 (Hwtx-2) family. 02 (Hwtx-2) subfamily. As to expression, expressed by the venom gland.

The protein resides in the secreted. Postsynaptic neurotoxin. The protein is U4-theraphotoxin-Hhn1ad of Cyriopagopus hainanus (Chinese bird spider).